Here is a 576-residue protein sequence, read N- to C-terminus: Septation ring formation regulator EzrA (576 aa).

Over methionine 1–isoleucine 7 the chain is Extracellular. Residues leucine 8 to methionine 26 traverse the membrane as a helical segment. Residues arginine 27–leucine 576 are Cytoplasmic-facing. Coiled-coil stretches lie at residues arginine 105 to leucine 134, glutamate 254 to glutamate 305, and glycine 356 to asparagine 402.

Belongs to the EzrA family.

The protein localises to the cell membrane. Its function is as follows. Negative regulator of FtsZ ring formation; modulates the frequency and position of FtsZ ring formation. Inhibits FtsZ ring formation at polar sites. Interacts either with FtsZ or with one of its binding partners to promote depolymerization. The protein is Septation ring formation regulator EzrA of Lactococcus lactis subsp. cremoris (strain MG1363).